A 102-amino-acid chain; its full sequence is Thioredoxin (102 aa).

Residues 1-102 (MVQVVSQENF…SLIKLISKHQ (102 aa)) form the Thioredoxin domain. Cysteine 28 and cysteine 31 form a disulfide bridge.

This sequence belongs to the thioredoxin family.

In terms of biological role, participates in various redox reactions through the reversible oxidation of its active center dithiol to a disulfide and catalyzes dithiol-disulfide exchange reactions. This is Thioredoxin (trxA) from Chlamydia trachomatis serovar D (strain ATCC VR-885 / DSM 19411 / UW-3/Cx).